Reading from the N-terminus, the 283-residue chain is Acetylglutamate kinase (283 aa).

Substrate contacts are provided by residues 63-64 (GG), R85, and N178.

The protein belongs to the acetylglutamate kinase family. ArgB subfamily.

The protein localises to the cytoplasm. It carries out the reaction N-acetyl-L-glutamate + ATP = N-acetyl-L-glutamyl 5-phosphate + ADP. Its pathway is amino-acid biosynthesis; L-arginine biosynthesis; N(2)-acetyl-L-ornithine from L-glutamate: step 2/4. Functionally, catalyzes the ATP-dependent phosphorylation of N-acetyl-L-glutamate. This chain is Acetylglutamate kinase, found in Prochlorococcus marinus (strain MIT 9312).